The chain runs to 488 residues: Glutamyl-tRNA(Gln) amidotransferase subunit A (488 aa).

Catalysis depends on charge relay system residues K77 and S152. The Acyl-ester intermediate role is filled by S176.

The protein belongs to the amidase family. GatA subfamily. Heterotrimer of A, B and C subunits.

The catalysed reaction is L-glutamyl-tRNA(Gln) + L-glutamine + ATP + H2O = L-glutaminyl-tRNA(Gln) + L-glutamate + ADP + phosphate + H(+). In terms of biological role, allows the formation of correctly charged Gln-tRNA(Gln) through the transamidation of misacylated Glu-tRNA(Gln) in organisms which lack glutaminyl-tRNA synthetase. The reaction takes place in the presence of glutamine and ATP through an activated gamma-phospho-Glu-tRNA(Gln). The sequence is that of Glutamyl-tRNA(Gln) amidotransferase subunit A from Streptococcus pneumoniae serotype 19F (strain G54).